Consider the following 323-residue polypeptide: Probable cell division protein WhiA (323 aa).

The segment at residues 275–309 (TLKELGEMLTTGQVSKSGINHRLRKLDQIAERLRS) is a DNA-binding region (H-T-H motif).

This sequence belongs to the WhiA family.

Its function is as follows. Involved in cell division and chromosome segregation. In Listeria welshimeri serovar 6b (strain ATCC 35897 / DSM 20650 / CCUG 15529 / CIP 8149 / NCTC 11857 / SLCC 5334 / V8), this protein is Probable cell division protein WhiA.